A 55-amino-acid chain; its full sequence is Large ribosomal subunit protein bL33 (55 aa).

It belongs to the bacterial ribosomal protein bL33 family.

This Escherichia coli (strain K12 / DH10B) protein is Large ribosomal subunit protein bL33.